Here is a 433-residue protein sequence, read N- to C-terminus: Myricetin 3-O-glucosyl 1,2-rhamnoside 6'-O-caffeoyltransferase AT1 (433 aa).

Residues His-157 and Asp-375 each act as proton acceptor in the active site.

Belongs to the plant acyltransferase family. Expressed in young cromes.

It catalyses the reaction myricetin 3-O-[beta-D-glucosyl-(1-&gt;2)-alpha-L-rhamnoside] + (E)-caffeoyl-CoA = myricetin 3-O-[(6-O-(E)-caffeoyl-beta-D-glucosyl)-(1-&gt;2)-alpha-L-rhamnoside] + CoA. The protein operates within flavonoid metabolism. Its function is as follows. Caffeoyltransferase involved in montbretin A (MbA) biosynthesis. Catalyzes the caffeoylation of myricetin 3-O-beta-D-glucosyl 1,2-alpha-L-rhamnoside (MRG) to produce myricetin 3-O-(6'-O-caffeoyl)-beta-D-glucosyl 1,2-alpha-L-rhamnoside (mini-MbA), a precursor of MbA. Mini-MbA and MbA are potent inhibitors of human pancreatic alpha-amylase and are being developed as drug candidates to treat type-2 diabetes. In vitro, is able to catalyze the caffeoylation of quercetin 3-O-sophoroside (QGG), although QGG may not be a physiological substrate in vivo. In vitro, can use coumaryl-CoA, feruloyl-CoA and acetyl-CoA, although these three acyl donors may not be physiological in vivo. The protein is Myricetin 3-O-glucosyl 1,2-rhamnoside 6'-O-caffeoyltransferase AT1 of Crocosmia x crocosmiiflora (Montbretia).